A 206-amino-acid polypeptide reads, in one-letter code: Small ribosomal subunit protein uS4 (206 aa).

In terms of domain architecture, S4 RNA-binding spans 96–158 (GRLDNVVYRM…AKKQSRIKAA (63 aa)).

This sequence belongs to the universal ribosomal protein uS4 family. In terms of assembly, part of the 30S ribosomal subunit. Contacts protein S5. The interaction surface between S4 and S5 is involved in control of translational fidelity.

One of the primary rRNA binding proteins, it binds directly to 16S rRNA where it nucleates assembly of the body of the 30S subunit. Functionally, with S5 and S12 plays an important role in translational accuracy. This Vibrio cholerae serotype O1 (strain ATCC 39541 / Classical Ogawa 395 / O395) protein is Small ribosomal subunit protein uS4.